A 451-amino-acid polypeptide reads, in one-letter code: Phosphoglucosamine mutase (451 aa).

The Phosphoserine intermediate role is filled by serine 101. Serine 101, aspartate 240, aspartate 242, and aspartate 244 together coordinate Mg(2+). A Phosphoserine modification is found at serine 101.

The protein belongs to the phosphohexose mutase family. Mg(2+) is required as a cofactor. Activated by phosphorylation.

The catalysed reaction is alpha-D-glucosamine 1-phosphate = D-glucosamine 6-phosphate. Its function is as follows. Catalyzes the conversion of glucosamine-6-phosphate to glucosamine-1-phosphate. In Streptococcus pyogenes serotype M18 (strain MGAS8232), this protein is Phosphoglucosamine mutase.